A 291-amino-acid chain; its full sequence is Ribosomal RNA small subunit methyltransferase A (291 aa).

Residues H21, L23, G48, E70, D95, and N115 each contribute to the S-adenosyl-L-methionine site.

It belongs to the class I-like SAM-binding methyltransferase superfamily. rRNA adenine N(6)-methyltransferase family. RsmA subfamily.

It localises to the cytoplasm. It carries out the reaction adenosine(1518)/adenosine(1519) in 16S rRNA + 4 S-adenosyl-L-methionine = N(6)-dimethyladenosine(1518)/N(6)-dimethyladenosine(1519) in 16S rRNA + 4 S-adenosyl-L-homocysteine + 4 H(+). Specifically dimethylates two adjacent adenosines (A1518 and A1519) in the loop of a conserved hairpin near the 3'-end of 16S rRNA in the 30S particle. May play a critical role in biogenesis of 30S subunits. The protein is Ribosomal RNA small subunit methyltransferase A of Prochlorococcus marinus (strain NATL1A).